The following is a 437-amino-acid chain: GTPase Der (437 aa).

2 EngA-type G domains span residues 3 to 167 (NIVA…TKKV) and 176 to 352 (PAIA…DIRQ). Residues 9-16 (GRPNVGKS), 56-60 (DTGGW), 119-122 (NKAD), 182-189 (GKPNVGKS), 229-233 (DTAGI), and 294-297 (NKWD) contribute to the GTP site. Residues 353–437 (IKIPTSQLNR…TPINIFMREK (85 aa)) form the KH-like domain.

It belongs to the TRAFAC class TrmE-Era-EngA-EngB-Septin-like GTPase superfamily. EngA (Der) GTPase family. In terms of assembly, associates with the 50S ribosomal subunit.

In terms of biological role, GTPase that plays an essential role in the late steps of ribosome biogenesis. This is GTPase Der from Azobacteroides pseudotrichonymphae genomovar. CFP2.